Reading from the N-terminus, the 790-residue chain is Probable copper-transporting ATPase SynA (790 aa).

Topologically, residues 1–105 (MPAAIVHSAD…IPPLQQQRLQ (105 aa)) are cytoplasmic. The region spanning 14 to 81 (TSILVEVEGM…EITGLGFRAQ (68 aa)) is the HMA domain. Cu(+) contacts are provided by Cys25 and Cys28. Residues 106 to 127 (LAIAAFLLIVSSWGHLGHWLDH) form a helical membrane-spanning segment. Residues 128 to 136 (PLPGTDQLW) are Extracellular-facing. The helical transmembrane segment at 137 to 156 (FHALLATWALLGPGRSILQA) threads the bilayer. The Cytoplasmic portion of the chain corresponds to 157 to 163 (GWQGLRC). A helical membrane pass occupies residues 164–184 (GAPNMNSLVLLGTGSAYLASL). Over 185–198 (VALLWPQLGWVCFF) the chain is Extracellular. A helical transmembrane segment spans residues 199-219 (DEPVMLLGFILLGRTLEEQAR). Over 220-358 (FRSQAALQNL…KAPVQRFADA (139 aa)) the chain is Cytoplasmic. The chain crosses the membrane as a helical span at residues 359-381 (IAGRFVYGVCAIAALTFGFWATL). Over 382-420 (GSRWWPQVLQQPLPGLLIHAPHHGMEMAHPHSHSPLLLA) the chain is Extracellular. The helical transmembrane segment at 421-438 (LTLAISVLVVACPCALGL) threads the bilayer. Residues 439–723 (ATPTAILVAT…NLSQMGLRTI (285 aa)) lie on the Cytoplasmic side of the membrane. The 4-aspartylphosphate intermediate role is filled by Asp476. Mg(2+)-binding residues include Asp669 and Asp673. A helical membrane pass occupies residues 724-743 (RQNLTWALGYNVVMLPLAAG). Over 744–755 (AFLPAYGLALTP) the chain is Extracellular. The chain crosses the membrane as a helical span at residues 756-774 (AIAGACMAVSSLAVVSNSL). The Cytoplasmic segment spans residues 775–790 (LLRYWFRRSLNHSVSV).

It belongs to the cation transport ATPase (P-type) (TC 3.A.3) family. Type IB subfamily.

It localises to the cell membrane. It carries out the reaction Cu(+)(in) + ATP + H2O = Cu(+)(out) + ADP + phosphate + H(+). Its function is as follows. Involved in copper transport. This Synechococcus elongatus (strain ATCC 33912 / PCC 7942 / FACHB-805) (Anacystis nidulans R2) protein is Probable copper-transporting ATPase SynA (synA).